An 89-amino-acid polypeptide reads, in one-letter code: Barrier-to-autointegration factor (89 aa).

At Met1 the chain carries N-acetylmethionine. The residue at position 2 (Thr2) is an N-acetylthreonine; in Barrier-to-autointegration factor, N-terminally processed. Phosphothreonine; by VRK1 and VRK2 occurs at positions 2 and 3. At Ser4 the chain carries Phosphoserine; by VRK1 and VRK2. Residues 20 to 35 enclose the HhH domain; it reads VGSLAGIGDVLSKRLE.

This sequence belongs to the BAF family. Homodimer. Heterodimerizes with BANF2. Interacts with ANKLE2/LEM4, leading to decreased phosphorylation by VRK1 and promoting dephosphorylation by protein phosphatase 2A (PP2A). Binds non-specifically to double-stranded DNA, and is found as a hexamer or dodecamer upon DNA binding. Binds to LEM domain-containing nuclear proteins such as LEMD3/MAN1, TMPO/LAP2 and EMD (emerin). Interacts with ANKLE1 (via LEM domain); the interaction may favor BANF1 dimerization. Interacts with CRX and LMNA (lamin-A). Binds linker histone H1.1 and core histones H3. Interacts with LEMD2 (via LEM domain). Interacts with PARP1; interaction takes place in response to oxidative DNA damage. In terms of processing, ser-4 is the major site of phosphorylation as compared to Thr-2 and Thr-3. Phosphorylation on Thr-2; Thr-3 and Ser-4 disrupts its ability to bind DNA and reduces its ability to bind LEM domain-containing proteins. Non phosphorylated BAF seems to enhance binding between EMD and LMNA. Dephosphorylated by protein phosphatase 2A (PP2A) following interaction with ANKLE2/LEM4 during mitotic exit, leading to mitotic nuclear envelope reassembly.

It is found in the nucleus. Its subcellular location is the chromosome. The protein localises to the nucleus envelope. The protein resides in the cytoplasm. Functionally, non-specific DNA-binding protein that plays key roles in mitotic nuclear reassembly, chromatin organization, DNA damage response, gene expression and intrinsic immunity against foreign DNA. Contains two non-specific double-stranded DNA (dsDNA)-binding sites which promote DNA cross-bridging. Plays a key role in nuclear membrane reformation at the end of mitosis by driving formation of a single nucleus in a spindle-independent manner. Transiently cross-bridges anaphase chromosomes via its ability to bridge distant DNA sites, leading to the formation of a dense chromatin network at the chromosome ensemble surface that limits membranes to the surface. Also acts as a negative regulator of innate immune activation by restricting CGAS activity toward self-DNA upon acute loss of nuclear membrane integrity. Outcompetes CGAS for DNA-binding, thereby preventing CGAS activation and subsequent damaging autoinflammatory responses. Also involved in DNA damage response: interacts with PARP1 in response to oxidative stress, thereby inhibiting the ADP-ribosyltransferase activity of PARP1. Involved in the recognition of exogenous dsDNA in the cytosol: associates with exogenous dsDNA immediately after its appearance in the cytosol at endosome breakdown and is required to avoid autophagy. In Mus musculus (Mouse), this protein is Barrier-to-autointegration factor.